Here is a 94-residue protein sequence, read N- to C-terminus: ESAT-6-like protein EsxI (94 aa).

Belongs to the WXG100 family. ESAT-6 subfamily.

It is found in the secreted. This is ESAT-6-like protein EsxI from Mycobacterium tuberculosis (strain CDC 1551 / Oshkosh).